A 472-amino-acid polypeptide reads, in one-letter code: Carbohydrate sulfotransferase 3 (472 aa).

The Cytoplasmic portion of the chain corresponds to 1 to 19 (MEKGLALPQDFRDLVHSLK). The helical; Signal-anchor for type II membrane protein transmembrane segment at 20 to 38 (IRGRYVLFLAFVVIVFIFI) threads the bilayer. Topologically, residues 39–472 (EKENKIISRV…LEERGTFWVT (434 aa)) are lumenal. N-linked (GlcNAc...) asparagine glycans are attached at residues asparagine 63, asparagine 74, and asparagine 96. 135–141 (TRTGSSF) is a 3'-phosphoadenylyl sulfate binding site. N-linked (GlcNAc...) asparagine glycosylation occurs at asparagine 250. 295-303 (RDPRAVLAS) contacts 3'-phosphoadenylyl sulfate. 2 N-linked (GlcNAc...) asparagine glycosylation sites follow: asparagine 413 and asparagine 457.

This sequence belongs to the sulfotransferase 1 family. Gal/GlcNAc/GalNAc subfamily. Post-translationally, N-glycosylated. Widely expressed. Highly expressed in spleen, lung, eye and stomach. Constitutively expressed at low level during the mid- to late-gestation period. Expressed in the brain in a temporally controlled manner: peaks at 2 weeks after birth in the cerebellum, but at 3 weeks in the cerebrum. Localizes to stromal cells in the bone marrow, and stromal cells in the marginal zone and red pulp of the spleen, but the sense probe did not.

Its subcellular location is the golgi apparatus membrane. It catalyses the reaction chondroitin beta-D-glucuronate + n 3'-phosphoadenylyl sulfate = chondroitin 6'-sulfate + n adenosine 3',5'-bisphosphate + n H(+). The enzyme catalyses 3'-phosphoadenylyl sulfate + keratan = adenosine 3',5'-bisphosphate + keratan 6'-sulfate.. In terms of biological role, sulfotransferase that utilizes 3'-phospho-5'-adenylyl sulfate (PAPS) as sulfonate donor to catalyze the transfer of sulfate to position 6 of the N-acetylgalactosamine (GalNAc) residue of chondroitin. Chondroitin sulfate constitutes the predominant proteoglycan present in cartilage and is distributed on the surfaces of many cells and extracellular matrices. Catalyzes with a lower efficiency the sulfation of Gal residues of keratan sulfate, another glycosaminoglycan. Can also catalyze the sulfation of the Gal residues in sialyl N-acetyllactosamine (sialyl LacNAc) oligosaccharides. May play a role in the maintenance of naive T-lymphocytes in the spleen. This chain is Carbohydrate sulfotransferase 3 (Chst3), found in Mus musculus (Mouse).